Consider the following 362-residue polypeptide: Glutamate 5-kinase (362 aa).

Lysine 3 serves as a coordination point for ATP. Substrate-binding residues include serine 43, aspartate 128, and asparagine 140. Residues 160–161 (TD) and 202–208 (TGGMRTK) contribute to the ATP site. One can recognise a PUA domain in the interval 267–348 (AGAILVDAGA…REIENVLGYS (82 aa)).

This sequence belongs to the glutamate 5-kinase family.

It localises to the cytoplasm. The catalysed reaction is L-glutamate + ATP = L-glutamyl 5-phosphate + ADP. The protein operates within amino-acid biosynthesis; L-proline biosynthesis; L-glutamate 5-semialdehyde from L-glutamate: step 1/2. Functionally, catalyzes the transfer of a phosphate group to glutamate to form L-glutamate 5-phosphate. In Xanthomonas oryzae pv. oryzae (strain KACC10331 / KXO85), this protein is Glutamate 5-kinase.